Reading from the N-terminus, the 249-residue chain is Triosephosphate isomerase (249 aa).

9–11 (NWK) lines the substrate pocket. H94 (electrophile) is an active-site residue. The active-site Proton acceptor is the E166. Substrate-binding positions include G172, S211, and 232 to 233 (GG).

This sequence belongs to the triosephosphate isomerase family. In terms of assembly, homodimer.

Its subcellular location is the cytoplasm. It carries out the reaction D-glyceraldehyde 3-phosphate = dihydroxyacetone phosphate. It functions in the pathway carbohydrate biosynthesis; gluconeogenesis. The protein operates within carbohydrate degradation; glycolysis; D-glyceraldehyde 3-phosphate from glycerone phosphate: step 1/1. In terms of biological role, involved in the gluconeogenesis. Catalyzes stereospecifically the conversion of dihydroxyacetone phosphate (DHAP) to D-glyceraldehyde-3-phosphate (G3P). The chain is Triosephosphate isomerase from Dechloromonas aromatica (strain RCB).